The sequence spans 376 residues: Drebrin-like protein B (376 aa).

The ADF-H domain maps to 2–133 (SVNLSKNGAA…EPESIMEKVA (132 aa)). Residues 175–231 (KENFWAKAEKDEEERRIEEHRRANVEKDRLERERKEREQREAEERERRFRERSKEID) are a coiled coil. The span at 202–242 (DRLERERKEREQREAEERERRFRERSKEIDGHRKQQEEVEK) shows a compositional bias: basic and acidic residues. The interval 202 to 288 (DRLERERKER…FTASQQEEEN (87 aa)) is disordered. Residues 268 to 283 (ESGSVSAQPEQFTASQ) show a composition bias toward polar residues. The 60-residue stretch at 317 to 376 (DSGMCARALYDYQAADDTEISFDPDDVIIQIEMIDDGWWRGVAPSGHFGMFPANYVELLE) folds into the SH3 domain.

This sequence belongs to the ABP1 family.

The protein resides in the cytoplasm. It is found in the cytoskeleton. It localises to the cell projection. The protein localises to the lamellipodium. Its subcellular location is the ruffle. The protein resides in the cell cortex. It is found in the cytosol. It localises to the synapse. The protein localises to the perikaryon. Its subcellular location is the neuron projection. The protein resides in the cell membrane. It is found in the cytoplasmic vesicle. It localises to the clathrin-coated vesicle membrane. The protein localises to the golgi apparatus membrane. Its subcellular location is the podosome. The protein resides in the early endosome. It is found in the dendrite. It localises to the postsynaptic density. Functionally, adapter protein that binds F-actin and dynamin, and thereby plays a role in receptor-mediated endocytosis. Plays a role in the reorganization of the actin cytoskeleton, formation of cell projections, such as neurites, in neuron morphogenesis and synapse formation. Does not bind G-actin and promote actin polymerization by itself, but excerts its functions by interaction with other proteins. Required for the formation of organized podosome rosettes. This chain is Drebrin-like protein B (dbnl-b), found in Xenopus laevis (African clawed frog).